Here is a 485-residue protein sequence, read N- to C-terminus: Adenosylhomocysteinase (485 aa).

Substrate contacts are provided by threonine 64, aspartate 139, and glutamate 205. 206 to 208 (TTT) is an NAD(+) binding site. Substrate-binding residues include lysine 235 and aspartate 239. NAD(+) contacts are provided by residues asparagine 240, 269–274 (GYGDVG), glutamate 292, asparagine 327, 348–350 (IGH), and asparagine 397.

Belongs to the adenosylhomocysteinase family. Requires NAD(+) as cofactor.

The catalysed reaction is S-adenosyl-L-homocysteine + H2O = L-homocysteine + adenosine. It functions in the pathway amino-acid biosynthesis; L-homocysteine biosynthesis; L-homocysteine from S-adenosyl-L-homocysteine: step 1/1. Adenosylhomocysteine is a competitive inhibitor of S-adenosyl-L-methionine-dependent methyl transferase reactions; therefore adenosylhomocysteinase may play a key role in the control of methylations via regulation of the intracellular concentration of adenosylhomocysteine. The sequence is that of Adenosylhomocysteinase (SAHH) from Nicotiana sylvestris (Wood tobacco).